The following is a 236-amino-acid chain: Sugar fermentation stimulation protein homolog (236 aa).

The protein belongs to the SfsA family.

The sequence is that of Sugar fermentation stimulation protein homolog from Pseudomonas fluorescens (strain SBW25).